Reading from the N-terminus, the 854-residue chain is Glucans biosynthesis glucosyltransferase H (854 aa).

The next 7 membrane-spanning stretches (helical) occupy residues 155-175 (ILLV…KTIL), 209-229 (ILVL…TALM), 528-548 (VFLT…FLML), 583-603 (IALF…SVIL), 619-639 (FISL…RMLF), 671-691 (FVRH…MAWL), and 695-715 (FLWW…VSVY).

The protein belongs to the glycosyltransferase 2 family. OpgH subfamily.

The protein resides in the cell inner membrane. It participates in glycan metabolism; osmoregulated periplasmic glucan (OPG) biosynthesis. Its function is as follows. Involved in the biosynthesis of osmoregulated periplasmic glucans (OPGs). In Pectobacterium carotovorum subsp. carotovorum (strain PC1), this protein is Glucans biosynthesis glucosyltransferase H.